Consider the following 202-residue polypeptide: Transcriptional regulator SdrP (202 aa).

Residues 117 to 189 enclose the HTH crp-type domain; sequence QRLKNRMAAA…YGKIQLLDLK (73 aa). Residues 149–168 constitute a DNA-binding region (H-T-H motif); the sequence is HDELAAAVGSVRETVTKVIG.

In terms of assembly, homodimer.

Functionally, activates transcription. The consensus DNA-binding site of this transcriptional regulator is 5'-WWGTGAN(5-7)ACACWW-3' in which W is A or T and N is G, A, T or C. Regulated genes include those encoding proteins involved in nutrient and energy supply, redox control and polyadenylation of mRNA. Also regulates genes involved in oxidative stress response such as genes encoding manganese superoxide dismutase and catalase, and genes encoding a protein involved in nucleotide excision repair of damaged DNA and putative proteins involved in redox control, protein degradation and transcriptional regulation. The sequence is that of Transcriptional regulator SdrP from Thermus thermophilus (strain ATCC 27634 / DSM 579 / HB8).